The chain runs to 300 residues: Ornithine carbamoyltransferase (300 aa).

Carbamoyl phosphate-binding positions include 49–52 (STRT), glutamine 76, arginine 100, and 127–130 (HPCQ). L-ornithine contacts are provided by residues asparagine 158, aspartate 218, and 222–223 (SM). Residues 258 to 259 (CL) and arginine 286 each bind carbamoyl phosphate.

It belongs to the aspartate/ornithine carbamoyltransferase superfamily. OTCase family.

It is found in the cytoplasm. The catalysed reaction is carbamoyl phosphate + L-ornithine = L-citrulline + phosphate + H(+). It participates in amino-acid biosynthesis; L-arginine biosynthesis; L-arginine from L-ornithine and carbamoyl phosphate: step 1/3. Reversibly catalyzes the transfer of the carbamoyl group from carbamoyl phosphate (CP) to the N(epsilon) atom of ornithine (ORN) to produce L-citrulline. This chain is Ornithine carbamoyltransferase, found in Nitratidesulfovibrio vulgaris (strain ATCC 29579 / DSM 644 / CCUG 34227 / NCIMB 8303 / VKM B-1760 / Hildenborough) (Desulfovibrio vulgaris).